The following is a 372-amino-acid chain: Sesquiterpene synthase Agr9 (372 aa).

Mg(2+)-binding residues include D87, N225, S229, and E233. The DDXXD motif signature appears at 87–91 (DEYTD). (2E,6E)-farnesyl diphosphate is bound by residues R314 and Y315.

The protein belongs to the terpene synthase family. Mg(2+) serves as cofactor.

It catalyses the reaction (2E,6E)-farnesyl diphosphate = gamma-muurolene + diphosphate. The enzyme catalyses (2E,6E)-farnesyl diphosphate = delta-cadinene + diphosphate. Functionally, terpene cyclase that catalyzes the cyclization of farnesyl diphosphate (FPP) to various sesquiterpenes, including gamma-muurolene, beta-cadinene and delta-cadinene. This is Sesquiterpene synthase Agr9 from Cyclocybe aegerita (Black poplar mushroom).